Here is a 326-residue protein sequence, read N- to C-terminus: Probable cell division protein WhiA (326 aa).

A DNA-binding region (H-T-H motif) is located at residues 275 to 308; it reads SLEELGQLADPPLTKDAIAGRIRRLLAMADKRAA.

It belongs to the WhiA family.

Its function is as follows. Involved in cell division and chromosome segregation. This Thermobifida fusca (strain YX) protein is Probable cell division protein WhiA.